The chain runs to 71 residues: DNA gyrase inhibitor YacG (71 aa).

Zn(2+) contacts are provided by Cys8, Cys11, Cys27, and Cys31. Positions 48 to 71 are disordered; it reads VVEDDDLPPDAPGGESGGASGRLN. Positions 61-71 are enriched in gly residues; it reads GESGGASGRLN.

This sequence belongs to the DNA gyrase inhibitor YacG family. In terms of assembly, interacts with GyrB. Zn(2+) serves as cofactor.

In terms of biological role, inhibits all the catalytic activities of DNA gyrase by preventing its interaction with DNA. Acts by binding directly to the C-terminal domain of GyrB, which probably disrupts DNA binding by the gyrase. This Ralstonia nicotianae (strain ATCC BAA-1114 / GMI1000) (Ralstonia solanacearum) protein is DNA gyrase inhibitor YacG.